The chain runs to 277 residues: Undecaprenyl-diphosphatase 2 (277 aa).

A run of 6 helical transmembrane segments spans residues 43–63, 87–107, 109–129, 183–203, 214–234, and 254–274; these read RAMA…VWEF, LLIA…TIHE, LFNP…MLWA, AATE…AVYS, SDLP…MIAV, and IAFG…WTAA.

Belongs to the UppP family.

The protein resides in the cell inner membrane. The catalysed reaction is di-trans,octa-cis-undecaprenyl diphosphate + H2O = di-trans,octa-cis-undecaprenyl phosphate + phosphate + H(+). Catalyzes the dephosphorylation of undecaprenyl diphosphate (UPP). Confers resistance to bacitracin. In Pseudomonas fluorescens (strain Pf0-1), this protein is Undecaprenyl-diphosphatase 2.